We begin with the raw amino-acid sequence, 537 residues long: CTP synthase (537 aa).

Residues 1 to 267 (MAKFVFVTGG…ADIVLDKLGI (267 aa)) form an amidoligase domain region. Ser-13 contributes to the CTP binding site. Residue Ser-13 coordinates UTP. Residue 14–19 (SLGKGI) participates in ATP binding. Tyr-54 lines the L-glutamine pocket. Asp-71 lines the ATP pocket. Mg(2+) is bound by residues Asp-71 and Glu-141. Residues 148–150 (DIE), 188–193 (KTKPTQ), and Lys-224 contribute to the CTP site. UTP contacts are provided by residues 188-193 (KTKPTQ) and Lys-224. Residues 292–534 (TIALVGKYVS…IGAARKYKES (243 aa)) enclose the Glutamine amidotransferase type-1 domain. Position 354 (Gly-354) interacts with L-glutamine. Cys-381 (nucleophile; for glutamine hydrolysis) is an active-site residue. L-glutamine is bound by residues 382 to 385 (LGMQ), Glu-405, and Arg-462. Residues His-507 and Glu-509 contribute to the active site.

It belongs to the CTP synthase family. In terms of assembly, homotetramer.

It catalyses the reaction UTP + L-glutamine + ATP + H2O = CTP + L-glutamate + ADP + phosphate + 2 H(+). The enzyme catalyses L-glutamine + H2O = L-glutamate + NH4(+). The catalysed reaction is UTP + NH4(+) + ATP = CTP + ADP + phosphate + 2 H(+). The protein operates within pyrimidine metabolism; CTP biosynthesis via de novo pathway; CTP from UDP: step 2/2. Allosterically activated by GTP, when glutamine is the substrate; GTP has no effect on the reaction when ammonia is the substrate. The allosteric effector GTP functions by stabilizing the protein conformation that binds the tetrahedral intermediate(s) formed during glutamine hydrolysis. Inhibited by the product CTP, via allosteric rather than competitive inhibition. Catalyzes the ATP-dependent amination of UTP to CTP with either L-glutamine or ammonia as the source of nitrogen. Regulates intracellular CTP levels through interactions with the four ribonucleotide triphosphates. The protein is CTP synthase of Pelotomaculum thermopropionicum (strain DSM 13744 / JCM 10971 / SI).